The primary structure comprises 474 residues: tRNA-2-methylthio-N(6)-dimethylallyladenosine synthase (474 aa).

An MTTase N-terminal domain is found at 21–138 (ERVYVETQGC…LPQMLARRRS (118 aa)). Positions 30, 67, 101, 175, 179, and 182 each coordinate [4Fe-4S] cluster. The region spanning 161–395 (RAEGPTAYVS…ARLHEQQSAA (235 aa)) is the Radical SAM core domain. The 64-residue stretch at 397 to 460 (RALLGTRQSV…THSLRGRVVS (64 aa)) folds into the TRAM domain.

The protein belongs to the methylthiotransferase family. MiaB subfamily. Monomer. [4Fe-4S] cluster is required as a cofactor.

It localises to the cytoplasm. The enzyme catalyses N(6)-dimethylallyladenosine(37) in tRNA + (sulfur carrier)-SH + AH2 + 2 S-adenosyl-L-methionine = 2-methylsulfanyl-N(6)-dimethylallyladenosine(37) in tRNA + (sulfur carrier)-H + 5'-deoxyadenosine + L-methionine + A + S-adenosyl-L-homocysteine + 2 H(+). Its function is as follows. Catalyzes the methylthiolation of N6-(dimethylallyl)adenosine (i(6)A), leading to the formation of 2-methylthio-N6-(dimethylallyl)adenosine (ms(2)i(6)A) at position 37 in tRNAs that read codons beginning with uridine. The protein is tRNA-2-methylthio-N(6)-dimethylallyladenosine synthase of Halorhodospira halophila (strain DSM 244 / SL1) (Ectothiorhodospira halophila (strain DSM 244 / SL1)).